Reading from the N-terminus, the 194-residue chain is GTP cyclohydrolase 1 (194 aa).

Zn(2+)-binding residues include Cys83, His86, and Cys155.

The protein belongs to the GTP cyclohydrolase I family. As to quaternary structure, toroid-shaped homodecamer, composed of two pentamers of five dimers.

The enzyme catalyses GTP + H2O = 7,8-dihydroneopterin 3'-triphosphate + formate + H(+). The protein operates within cofactor biosynthesis; 7,8-dihydroneopterin triphosphate biosynthesis; 7,8-dihydroneopterin triphosphate from GTP: step 1/1. This Streptococcus pyogenes protein is GTP cyclohydrolase 1 (folE).